A 95-amino-acid polypeptide reads, in one-letter code: Cell division topological specificity factor (95 aa).

This sequence belongs to the MinE family.

Functionally, prevents the cell division inhibition by proteins MinC and MinD at internal division sites while permitting inhibition at polar sites. This ensures cell division at the proper site by restricting the formation of a division septum at the midpoint of the long axis of the cell. This is Cell division topological specificity factor from Microcystis aeruginosa (strain NIES-843 / IAM M-2473).